Consider the following 511-residue polypeptide: NAD(P)H-quinone oxidoreductase subunit 2, chloroplastic (511 aa).

The next 14 helical transmembrane spans lie at 15–35 (LLPE…DLTF), 39–59 (VLSW…VVLL), 78–98 (SLSI…ILLS), 108–128 (ALTE…LLSG), 132–152 (LIMI…LTGY), 167–187 (LLIG…LYGL), 210–230 (FASW…VAAA), 244–264 (PTPV…ALAT), 278–298 (WHLL…LIAI), 306–326 (MLGY…IAGN), 334–354 (LVYM…IILF), 377–397 (VFCF…AGFF), 410–430 (GFYI…YYYL), and 466–486 (LGIG…NPII).

The protein belongs to the complex I subunit 2 family. As to quaternary structure, NDH is composed of at least 16 different subunits, 5 of which are encoded in the nucleus.

Its subcellular location is the plastid. It localises to the chloroplast thylakoid membrane. The catalysed reaction is a plastoquinone + NADH + (n+1) H(+)(in) = a plastoquinol + NAD(+) + n H(+)(out). The enzyme catalyses a plastoquinone + NADPH + (n+1) H(+)(in) = a plastoquinol + NADP(+) + n H(+)(out). Its function is as follows. NDH shuttles electrons from NAD(P)H:plastoquinone, via FMN and iron-sulfur (Fe-S) centers, to quinones in the photosynthetic chain and possibly in a chloroplast respiratory chain. The immediate electron acceptor for the enzyme in this species is believed to be plastoquinone. Couples the redox reaction to proton translocation, and thus conserves the redox energy in a proton gradient. This is NAD(P)H-quinone oxidoreductase subunit 2, chloroplastic from Chlorokybus atmophyticus (Soil alga).